Here is an 813-residue protein sequence, read N- to C-terminus: Molybdenum cofactor sulfurase (813 aa).

N6-(pyridoxal phosphate)lysine is present on Lys-228. Cys-391 is a catalytic residue. Residues 625-670 (PSLRHAKAHMQKHQGPKRSAAIEKSSAHSFHDPPTPPDSDSENRKR) are disordered. Residues 628-640 (RHAKAHMQKHQGP) show a composition bias toward basic residues. An MOSC domain is found at 648–812 (KSSAHSFHDP…IKVGDKVSIG (165 aa)).

This sequence belongs to the class-V pyridoxal-phosphate-dependent aminotransferase family. MOCOS subfamily. Pyridoxal 5'-phosphate serves as cofactor.

It catalyses the reaction Mo-molybdopterin + L-cysteine + AH2 = thio-Mo-molybdopterin + L-alanine + A + H2O. Functionally, sulfurates the molybdenum cofactor. Sulfation of molybdenum is essential for xanthine dehydrogenase (XDH) and aldehyde oxidase (ADO) enzymes in which molybdenum cofactor is liganded by 1 oxygen and 1 sulfur atom in active form. The chain is Molybdenum cofactor sulfurase from Botryotinia fuckeliana (strain B05.10) (Noble rot fungus).